The following is a 281-amino-acid chain: Bifunctional protein FolD (281 aa).

Residues 165-167 (GRG), Thr-192, and Val-233 contribute to the NADP(+) site.

It belongs to the tetrahydrofolate dehydrogenase/cyclohydrolase family. In terms of assembly, homodimer.

The enzyme catalyses (6R)-5,10-methylene-5,6,7,8-tetrahydrofolate + NADP(+) = (6R)-5,10-methenyltetrahydrofolate + NADPH. It catalyses the reaction (6R)-5,10-methenyltetrahydrofolate + H2O = (6R)-10-formyltetrahydrofolate + H(+). The protein operates within one-carbon metabolism; tetrahydrofolate interconversion. Functionally, catalyzes the oxidation of 5,10-methylenetetrahydrofolate to 5,10-methenyltetrahydrofolate and then the hydrolysis of 5,10-methenyltetrahydrofolate to 10-formyltetrahydrofolate. The protein is Bifunctional protein FolD of Mycobacterium marinum (strain ATCC BAA-535 / M).